A 212-amino-acid polypeptide reads, in one-letter code: Large ribosomal subunit protein bL25 (212 aa).

The interval 181–212 is disordered; it reads LSEPKEEVIEEDVEEVSADVPTVSETEEEDAE. Acidic residues predominate over residues 188–197; it reads VIEEDVEEVS.

It belongs to the bacterial ribosomal protein bL25 family. CTC subfamily. As to quaternary structure, part of the 50S ribosomal subunit; part of the 5S rRNA/L5/L18/L25 subcomplex. Contacts the 5S rRNA. Binds to the 5S rRNA independently of L5 and L18.

Functionally, this is one of the proteins that binds to the 5S RNA in the ribosome where it forms part of the central protuberance. The sequence is that of Large ribosomal subunit protein bL25 from Finegoldia magna (strain ATCC 29328 / DSM 20472 / WAL 2508) (Peptostreptococcus magnus).